Here is a 374-residue protein sequence, read N- to C-terminus: 4-hydroxy-3-methylbut-2-en-1-yl diphosphate synthase (flavodoxin) (374 aa).

Cysteine 270, cysteine 273, cysteine 305, and glutamate 312 together coordinate [4Fe-4S] cluster.

Belongs to the IspG family. It depends on [4Fe-4S] cluster as a cofactor.

The catalysed reaction is (2E)-4-hydroxy-3-methylbut-2-enyl diphosphate + oxidized [flavodoxin] + H2O + 2 H(+) = 2-C-methyl-D-erythritol 2,4-cyclic diphosphate + reduced [flavodoxin]. The protein operates within isoprenoid biosynthesis; isopentenyl diphosphate biosynthesis via DXP pathway; isopentenyl diphosphate from 1-deoxy-D-xylulose 5-phosphate: step 5/6. Its function is as follows. Converts 2C-methyl-D-erythritol 2,4-cyclodiphosphate (ME-2,4cPP) into 1-hydroxy-2-methyl-2-(E)-butenyl 4-diphosphate. The protein is 4-hydroxy-3-methylbut-2-en-1-yl diphosphate synthase (flavodoxin) of Yersinia enterocolitica serotype O:8 / biotype 1B (strain NCTC 13174 / 8081).